The chain runs to 334 residues: MARDEVRRILPADIKREVLIKDEKAETNPKWGFPPERRPMEMHMQFGIINLDKPPGPTSHEVVAWIKKLFNLSKAGHGGTLDPKVSGVLPVALERATRVVQALLPAGKEYVALMHLHGDIPEDKILAVMKEFQGEIIQRPPLRSAVKRRLRTRKVYYIEVLEIEGRDVLFRVGVEAGTYIRSLIHHIGLALGVGAHMAELRRTRSGPFKEDETLVTLHDLVDYYHFWKEDGIEEYFRKAIQPMEKAVEHLPKVWIRDSAVAAVTHGADLAVPGIVKLHKGIKKGDLVAIMTLKDELVALGKAMMTSGEMLQRSKGIAVDVDKVFMPRDWYPRMW.

D82 functions as the Nucleophile in the catalytic mechanism. The PUA domain occupies 250-325 (LPKVWIRDSA…IAVDVDKVFM (76 aa)).

The protein belongs to the pseudouridine synthase TruB family. Type 2 subfamily.

It catalyses the reaction uridine(55) in tRNA = pseudouridine(55) in tRNA. Functionally, could be responsible for synthesis of pseudouridine from uracil-55 in the psi GC loop of transfer RNAs. The polypeptide is Probable tRNA pseudouridine synthase B (Thermococcus gammatolerans (strain DSM 15229 / JCM 11827 / EJ3)).